The following is a 127-amino-acid chain: Large ribosomal subunit protein bL19 (127 aa).

It belongs to the bacterial ribosomal protein bL19 family.

Its function is as follows. This protein is located at the 30S-50S ribosomal subunit interface and may play a role in the structure and function of the aminoacyl-tRNA binding site. The chain is Large ribosomal subunit protein bL19 from Cupriavidus pinatubonensis (strain JMP 134 / LMG 1197) (Cupriavidus necator (strain JMP 134)).